Consider the following 120-residue polypeptide: Proteinase inhibitor (120 aa).

Residues M1–A19 form the signal peptide. C43 and C65 are oxidised to a cystine.

The protein belongs to the protease inhibitor I38 family. As to quaternary structure, monomer.

It is found in the periplasm. Functionally, inhibitor of the extracellular proteases A, B, and C of E.chrysanthemi and the S.marcescens 50 kDa extracellular protease. It forms a non-covalent bond with the proteases and may prevent autocatalytic cleavage of the proteases zymogen in the periplasm. This is Proteinase inhibitor (inh) from Dickeya chrysanthemi (Pectobacterium chrysanthemi).